Consider the following 411-residue polypeptide: MMP alpha-(1-&gt;4)-mannosyltransferase (411 aa).

Belongs to the glycosyltransferase group 1 family. Glycosyltransferase 4 subfamily.

The catalysed reaction is [3-O-methyl-alpha-D-mannosyl-(1-&gt;4)](n)-3-O-methyl-D-mannose + GDP-alpha-D-mannose = alpha-D-mannosyl-(1-&gt;4)-[3-O-methyl-alpha-D-mannosyl-(1-&gt;4)](n)-3-O-methyl-D-mannose + GDP + H(+). It carries out the reaction [3-O-methyl-alpha-D-mannosyl-(1-&gt;4)](n)-1-O,3-O-dimethyl-alpha-D-mannose + GDP-alpha-D-mannose = alpha-D-mannosyl-(1-&gt;4)-[3-O-methyl-alpha-D-mannosyl-(1-&gt;4)](n)-1-O,3-O-dimethyl-alpha-D-mannose + GDP + H(+). Activity is significantly enhanced in the presence of Mg(2+). In terms of biological role, glycosyltransferase involved in the biosynthesis of 3-O-methylmannose polysaccharides (MMP), which are intracellular polymethylated polysaccharides implicated in the modulation of fatty acid metabolism in non-tuberculous mycobacteria. Highly specific alpha-(1-&gt;4)-mannosyltransferase that can transfer mannose units from GDP-mannose to a wide range of alpha-(1-&gt;4) oligomannosides longer than three mannoses, including all hydrolytic products of MmpH. Can use synthetic trimannosides and tetramannosides as substrates, but not mono- and disaccharides, and is significantly more active with the methylated substrates, preferring the tetramannosides over the trimannosides. This chain is MMP alpha-(1-&gt;4)-mannosyltransferase, found in Mycolicibacterium hassiacum (strain DSM 44199 / CIP 105218 / JCM 12690 / 3849) (Mycobacterium hassiacum).